Here is a 205-residue protein sequence, read N- to C-terminus: Pyrrolidone-carboxylate peptidase (205 aa).

Active-site residues include Glu-78, Cys-141, and His-165.

Belongs to the peptidase C15 family. As to quaternary structure, homotetramer.

Its subcellular location is the cytoplasm. The enzyme catalyses Release of an N-terminal pyroglutamyl group from a polypeptide, the second amino acid generally not being Pro.. Its function is as follows. Removes 5-oxoproline from various penultimate amino acid residues except L-proline. This chain is Pyrrolidone-carboxylate peptidase, found in Thermosipho africanus (strain TCF52B).